Reading from the N-terminus, the 677-residue chain is Methionine--tRNA ligase (677 aa).

The 'HIGH' region motif lies at 15 to 25 (PYANGSIHLGH). Zn(2+) contacts are provided by C146, C149, C159, and C162. Positions 333 to 337 (KMSKS) match the 'KMSKS' region motif. An ATP-binding site is contributed by K336. In terms of domain architecture, tRNA-binding spans 575–677 (DFAKIDLRVA…DGAKPGQQVK (103 aa)).

Belongs to the class-I aminoacyl-tRNA synthetase family. MetG type 1 subfamily. Homodimer. It depends on Zn(2+) as a cofactor.

The protein localises to the cytoplasm. It catalyses the reaction tRNA(Met) + L-methionine + ATP = L-methionyl-tRNA(Met) + AMP + diphosphate. In terms of biological role, is required not only for elongation of protein synthesis but also for the initiation of all mRNA translation through initiator tRNA(fMet) aminoacylation. This is Methionine--tRNA ligase from Salmonella paratyphi B (strain ATCC BAA-1250 / SPB7).